Reading from the N-terminus, the 120-residue chain is Large ribosomal subunit protein uL18 (120 aa).

Belongs to the universal ribosomal protein uL18 family. Part of the 50S ribosomal subunit; part of the 5S rRNA/L5/L18/L25 subcomplex. Contacts the 5S and 23S rRNAs.

This is one of the proteins that bind and probably mediate the attachment of the 5S RNA into the large ribosomal subunit, where it forms part of the central protuberance. This chain is Large ribosomal subunit protein uL18, found in Sinorhizobium medicae (strain WSM419) (Ensifer medicae).